A 140-amino-acid chain; its full sequence is Large ribosomal subunit protein uL11 (140 aa).

This sequence belongs to the universal ribosomal protein uL11 family. Part of the ribosomal stalk of the 50S ribosomal subunit. Interacts with L10 and the large rRNA to form the base of the stalk. L10 forms an elongated spine to which L12 dimers bind in a sequential fashion forming a multimeric L10(L12)X complex. Post-translationally, one or more lysine residues are methylated.

Functionally, forms part of the ribosomal stalk which helps the ribosome interact with GTP-bound translation factors. The sequence is that of Large ribosomal subunit protein uL11 from Syntrophotalea carbinolica (strain DSM 2380 / NBRC 103641 / GraBd1) (Pelobacter carbinolicus).